Reading from the N-terminus, the 969-residue chain is Defective in germ line development protein 3 (969 aa).

The tract at residues 34 to 81 is gld-2-binding; the sequence is MAENAASARKLFVSSALKDIIVNPENFYHDFQQSAQMAEDANQRRQVS. 5 KH domains span residues 34 to 109, 113 to 187, 189 to 259, 270 to 342, and 344 to 419; these read MAEN…MIEI, RVTL…MRRN, HFTV…NEIL, FTLH…IMDL, and PISM…YQKV. Residues 57-471 form a gls-1-binding region; the sequence is PENFYHDFQQ…GSNGRRHRSS (415 aa). Disordered regions lie at residues 459–508 and 602–711; these read LSDG…SFSE and EQHR…GDIH. A compositionally biased stretch (polar residues) spans 487–508; that stretch reads KQFSESSGGPSRSHTRVSSFSE. Residues 631-644 show a composition bias toward low complexity; it reads PSSSTGSYYPSTTP. Over residues 647-659 the composition is skewed to basic and acidic residues; it reads RVYEQVREDDLRS. Over residues 664–676 the composition is skewed to polar residues; that stretch reads RRTSVNGDDQNVE. Basic and acidic residues-rich tracts occupy residues 677-687 and 694-711; these read SMHDQGYERQY and LQKDDQQRWKTGSRGDIH. The interval 769–969 is gls-1-binding; the sequence is LYMHESPHND…DLSLDETSTY (201 aa). The segment at 860–949 is fbf-1-binding; that stretch reads NGVTKTILEP…VLNEKEKEIA (90 aa). The interval 950-969 is disordered; it reads DKSIESTVTQDLSLDETSTY. Polar residues predominate over residues 954-969; sequence ESTVTQDLSLDETSTY.

As to quaternary structure, interacts (via its KH1 domain) with gld-2. Isoform A but not isoform B interacts specifically with fbf-1 and fbf-2 in an RNA-independent manner. Isoform A interacts with gls-1 isoform C. As to expression, expressed in the germline (at protein level). In adult hermaphrodites, first detected in the transition zone (TZ), weakly expressed in the early mitotic region and in pachytene germ cells, and becomes more abundantly expressed as germ cells enter diakinesis (at protein level). Expressed in primary spermatocytes, but not in secondary spermatocytes or adult sperm (at protein level).

The protein localises to the cytoplasm. Its subcellular location is the cytoplasmic granule. It is found in the perinuclear region. Its function is as follows. Required maternally for germline survival and embryogenesis. Forms a complex with gls-1 which promotes the oogenic cell fate by freeing the translational repressor fbf to repress sperm promoting factors. Promotes maturation of primary spermatocytes to mature sperm. Required during hermaphrodite development to promote sperm fate, which is critical for determining the normal number of sperm. Promotion of sperm fate is at the expense of oogenesis, possibly through the negative regulation of fbf. Required during male development for the continued production of sperm and inhibition of oogenesis. Together with gld-2, promotes the transition from mitosis to meiosis. Required for polyadenylation of neg-1 mRNA during embryogenesis. The chain is Defective in germ line development protein 3 from Caenorhabditis elegans.